The following is a 348-amino-acid chain: Spermatogenesis-associated protein 32 (348 aa).

Residues 27–36 show a composition bias toward basic and acidic residues; it reads YHHHHHPLED. The tract at residues 27 to 61 is disordered; the sequence is YHHHHHPLEDNKDEDNEMGTELSSMKPPPKVDPDP. Residues Ser149 and Ser152 each carry the phosphoserine modification. The tract at residues 308–329 is disordered; sequence APATSPELQEDKDDSVPGTKKG. A Phosphothreonine modification is found at Thr330.

Interacts with syntaxin-1 and ACTB. Abundantly expressed in testes. Expressed in germ cells, but not in Sertoli or Leydig cells of the adult testis. Localized at the acrosomal region of the round and elongated spermatids at stages VIII-X.

The polypeptide is Spermatogenesis-associated protein 32 (Spata32) (Rattus norvegicus (Rat)).